The sequence spans 312 residues: uncharacterized protein (312 aa).

It belongs to the asfivirus CP312R family.

The protein localises to the virion. This is an uncharacterized protein from African swine fever virus (isolate Tick/South Africa/Pretoriuskop Pr4/1996) (ASFV).